A 128-amino-acid chain; its full sequence is Small ribosomal subunit protein bS6 (128 aa).

Residues 100–128 (SPMAKAKEERFTRRDDERREEATEAASEE) form a disordered region. Positions 104-121 (KAKEERFTRRDDERREEA) are enriched in basic and acidic residues.

The protein belongs to the bacterial ribosomal protein bS6 family.

Its function is as follows. Binds together with bS18 to 16S ribosomal RNA. The protein is Small ribosomal subunit protein bS6 of Aeromonas hydrophila subsp. hydrophila (strain ATCC 7966 / DSM 30187 / BCRC 13018 / CCUG 14551 / JCM 1027 / KCTC 2358 / NCIMB 9240 / NCTC 8049).